The following is a 301-amino-acid chain: uncharacterized protein (301 aa).

9 consecutive transmembrane segments (helical) span residues 1-21, 33-53, 72-92, 101-121, 124-144, 194-214, 220-240, 253-273, and 274-294; these read MSWI…LRII, SVLF…YVYY, AMSL…KIPW, FGII…IILI, FAWL…KTFY, VLIE…IFAI, IIYT…FCLA, LALI…IAIP, and EYVA…ASII.

The protein belongs to the TerC family.

The protein localises to the cell membrane. This is an uncharacterized protein from Rickettsia conorii (strain ATCC VR-613 / Malish 7).